The primary structure comprises 952 residues: Anion exchange protein 4 (952 aa).

Residues 1-41 (MKLPGQGDFESSDAHENAHSEEPDSGLGPGPGLNGPSGIDI) are disordered. Residues 12–22 (SDAHENAHSEE) are compositionally biased toward basic and acidic residues. A run of 4 helical transmembrane segments spans residues 385–405 (AVFYIYLATVTNAITFGGLLG), 413–433 (GVLESFLGTAVAGAAFCLMAG), 470–490 (VGIWVTAFCLALVATEASLLV), and 501–521 (FCALISLIFIYDAMGKMLNLI). Residues N546 and N569 are each glycosylated (N-linked (GlcNAc...) asparagine). 7 consecutive transmembrane segments (helical) span residues 593–613 (VPDIAFFSLLLFFTSFLCAIA), 634–654 (FSSVLAILLGCGLDTFLGLAT), 681–701 (PWWLSVAAALPALLLSILIFM), 727–747 (LFCVAVLMLFTSALGLPWYVS), 784–804 (GLVVFVLTGVSIFLAPVLKFI), 807–827 (PVLYGIFLYMGVAALSSIQFV), and 870–890 (VVKSTPAAIVFPLMLLGLVAI). The segment at 915 to 938 (ETIPENRSEPEHLFSGNDSEDSEL) is disordered. 3 N-linked (GlcNAc...) asparagine glycosylation sites follow: N920, N931, and N948.

This sequence belongs to the anion exchanger (TC 2.A.31) family. As to expression, expressed in submandibular gland (SMG) duct and cortical collecting duct (CCD) of kidney. Lower expressed in duodenal villi.

It is found in the basolateral cell membrane. The catalysed reaction is 2 hydrogencarbonate(out) + chloride(in) + Na(+)(out) = 2 hydrogencarbonate(in) + chloride(out) + Na(+)(in). It carries out the reaction K(+)(in) + 2 hydrogencarbonate(in) + chloride(out) = K(+)(out) + 2 hydrogencarbonate(out) + chloride(in). The enzyme catalyses Li(+)(in) + 2 hydrogencarbonate(in) + chloride(out) = Li(+)(out) + 2 hydrogencarbonate(out) + chloride(in). It catalyses the reaction Rb(+)(in) + 2 hydrogencarbonate(in) + chloride(out) = Rb(+)(out) + 2 hydrogencarbonate(out) + chloride(in). The catalysed reaction is Cs(+)(in) + 2 hydrogencarbonate(in) + chloride(out) = Cs(+)(out) + 2 hydrogencarbonate(out) + chloride(in). Its activity is regulated as follows. Cl(-)/HCO3(-) exchanger activity is substantially increased in response to 5 uM isoproterenol. Cl(-)/HCO3(-) exchanger activity is increased by both forskolin and coexpression with the catalytic subunit alpha of PKA. Functionally, electroneutral Cl(-)/HCO3(-) antiporter that favors chloride ion entry and efflux of hydrogencarbonate and sodium ion across the basolateral membrane and may participate in salivary secretion. Also mediates Cl(-)/HCO3(-) exchange activity in the presence of K(+) as well as Cs(+), Li(+), and Rb(+). Does not contribute to Cl(-)/HCO3(-) exchanger in the apical membrane of the upper villous epithelium. In Mus musculus (Mouse), this protein is Anion exchange protein 4.